Here is a 306-residue protein sequence, read N- to C-terminus: Porphobilinogen deaminase (306 aa).

S-(dipyrrolylmethanemethyl)cysteine is present on cysteine 237.

The protein belongs to the HMBS family. As to quaternary structure, monomer. It depends on dipyrromethane as a cofactor.

It carries out the reaction 4 porphobilinogen + H2O = hydroxymethylbilane + 4 NH4(+). It functions in the pathway porphyrin-containing compound metabolism; protoporphyrin-IX biosynthesis; coproporphyrinogen-III from 5-aminolevulinate: step 2/4. Functionally, tetrapolymerization of the monopyrrole PBG into the hydroxymethylbilane pre-uroporphyrinogen in several discrete steps. The sequence is that of Porphobilinogen deaminase from Syntrophus aciditrophicus (strain SB).